The chain runs to 140 residues: Sex-regulated protein janus-B (140 aa).

Arg-42 lines the substrate pocket. The active-site Proton acceptor is His-69. A substrate-binding site is contributed by 110–112 (SRT).

This sequence belongs to the janus family. As to expression, germline cells of adult males.

Functionally, janA and janB regulate somatic sex differentiation. This chain is Sex-regulated protein janus-B (janB), found in Drosophila melanogaster (Fruit fly).